We begin with the raw amino-acid sequence, 609 residues long: MSDEFNANQFLKTVTSSPGVYRMYDAKDAVIYVGKAKDLKKRLSSYFRKNLANVKTQALVSHIANIDVTVTHSETDALILENDYIKQYMPKYNVLLRDDKSYPYILLSNHQHPRLAYHRGPKRDKGQYFGPYPNGGAVRESLHLMQKIFPIRQCDDLYYKSRSRPCLQYQIGRCSAPCVDLVSEEDYQEQVRLATLFLKGKNQQVMSVLVQKMEQASSDMRYEQAALYRDQITALRRVSEQQEVSNASGDMDVIGAYYASGVACFHLLFIREGKIFGSRSYYPKVPVNTEVSEVLRSFMLQFYLNSDSQRLTPKEILISDAFEEQAELADAIQSAQNKKVEIKTQVRGERASFLRLALTNATNAVNTRLSHKNTIEQRFLLLEEAIESTNKIQRMECFDISHTMGESTVASCVVFNREGPSKADYRRYNITGITPGDDYAAMKQAITRRFDKITEKGKIPDILFIDGGIGQLRIAQKVVDEQFVALDNAPTLIGVAKGEGRKPGLETLIYGESEESFSLPADSGALHLIQHIRDESHRFAITGHRNKRQKTRNTSTLETIAGVGPKRRKALLQYLGGLQEVKGASVSELAKVPGISLEMAQTIHDALRG.

Residues 16–94 (SSPGVYRMYD…IKQYMPKYNV (79 aa)) form the GIY-YIG domain. Positions 203 to 238 (QQVMSVLVQKMEQASSDMRYEQAALYRDQITALRRV) constitute a UVR domain.

The protein belongs to the UvrC family. In terms of assembly, interacts with UvrB in an incision complex.

The protein resides in the cytoplasm. Its function is as follows. The UvrABC repair system catalyzes the recognition and processing of DNA lesions. UvrC both incises the 5' and 3' sides of the lesion. The N-terminal half is responsible for the 3' incision and the C-terminal half is responsible for the 5' incision. In Shewanella pealeana (strain ATCC 700345 / ANG-SQ1), this protein is UvrABC system protein C.